The primary structure comprises 463 residues: Tryprostatin B synthase (463 aa).

Brevianamide F is bound by residues Met-93 and Glu-101. Residues Arg-112, Lys-200, and Tyr-202 each coordinate dimethylallyl diphosphate. Residue Tyr-204 coordinates brevianamide F. Residues Lys-293, Tyr-295, Gln-379, Tyr-381, Tyr-445, and Tyr-449 each coordinate dimethylallyl diphosphate.

The protein belongs to the tryptophan dimethylallyltransferase family.

The enzyme catalyses brevianamide F + dimethylallyl diphosphate = tryprostatin B + diphosphate. The protein operates within mycotoxin biosynthesis. Functionally, brevianamide F prenyltransferase; part of the gene cluster that mediates the biosynthesis of fumitremorgins, indole alkaloids that carry not only intriguing chemical structures, but also interesting biological and pharmacological activities. The biosynthesis of fumitremorgin-type alkaloids begins by condensation of the two amino acids L-tryptophan and L-proline to brevianamide F, catalyzed by the non-ribosomal peptide synthetase ftmPS/ftmA. Brevianamide F is then prenylated by the prenyltransferase ftmPT1/ftmB in the presence of dimethylallyl diphosphate, resulting in the formation of tryprostatin B. The three cytochrome P450 monooxygenases, ftmP450-1/ftmC, ftmP450-2/ftmE and ftmP450-3/FtmG, are responsible for the conversion of tryprostatin B to 6-hydroxytryprostatin B, tryprostatin A to fumitremorgin C and fumitremorgin C to 12,13-dihydroxyfumitremorgin C, respectively. The putative methyltransferase ftmMT/ftmD is expected for the conversion of 6-hydroxytryprostatin B to tryprostatin A. FtmPT2/FtmH catalyzes the prenylation of 12,13-dihydroxyfumitre-morgin C in the presence of dimethylallyl diphosphate, resulting in the formation of fumitremorgin B. Fumitremorgin B is further converted to verruculogen by ftmOx1/ftmF via the insertion of an endoperoxide bond between the two prenyl moieties. Finally, verruculogen is further converted to fumitremorgin A by the verruculogen prenyltransferase ftmPT3. The polypeptide is Tryprostatin B synthase (Neosartorya fischeri (strain ATCC 1020 / DSM 3700 / CBS 544.65 / FGSC A1164 / JCM 1740 / NRRL 181 / WB 181) (Aspergillus fischerianus)).